The chain runs to 212 residues: Imidazole glycerol phosphate synthase subunit HisH (212 aa).

Residues 1–211 (MIGVIDYGMG…KQFTQEQKVK (211 aa)) enclose the Glutamine amidotransferase type-1 domain. The active-site Nucleophile is the cysteine 79. Residues histidine 186 and glutamate 188 contribute to the active site.

As to quaternary structure, heterodimer of HisH and HisF.

Its subcellular location is the cytoplasm. It carries out the reaction 5-[(5-phospho-1-deoxy-D-ribulos-1-ylimino)methylamino]-1-(5-phospho-beta-D-ribosyl)imidazole-4-carboxamide + L-glutamine = D-erythro-1-(imidazol-4-yl)glycerol 3-phosphate + 5-amino-1-(5-phospho-beta-D-ribosyl)imidazole-4-carboxamide + L-glutamate + H(+). The catalysed reaction is L-glutamine + H2O = L-glutamate + NH4(+). It functions in the pathway amino-acid biosynthesis; L-histidine biosynthesis; L-histidine from 5-phospho-alpha-D-ribose 1-diphosphate: step 5/9. In terms of biological role, IGPS catalyzes the conversion of PRFAR and glutamine to IGP, AICAR and glutamate. The HisH subunit catalyzes the hydrolysis of glutamine to glutamate and ammonia as part of the synthesis of IGP and AICAR. The resulting ammonia molecule is channeled to the active site of HisF. The protein is Imidazole glycerol phosphate synthase subunit HisH of Bacillus licheniformis (strain ATCC 14580 / DSM 13 / JCM 2505 / CCUG 7422 / NBRC 12200 / NCIMB 9375 / NCTC 10341 / NRRL NRS-1264 / Gibson 46).